A 402-amino-acid polypeptide reads, in one-letter code: UDP-N-acetylmuramoylalanine--D-glutamate ligase (402 aa).

Glycine 97–threonine 103 serves as a coordination point for ATP.

Belongs to the MurCDEF family.

It is found in the cytoplasm. It carries out the reaction UDP-N-acetyl-alpha-D-muramoyl-L-alanine + D-glutamate + ATP = UDP-N-acetyl-alpha-D-muramoyl-L-alanyl-D-glutamate + ADP + phosphate + H(+). Its pathway is cell wall biogenesis; peptidoglycan biosynthesis. Functionally, cell wall formation. Catalyzes the addition of glutamate to the nucleotide precursor UDP-N-acetylmuramoyl-L-alanine (UMA). The polypeptide is UDP-N-acetylmuramoylalanine--D-glutamate ligase (Campylobacter jejuni (strain RM1221)).